The sequence spans 603 residues: UvrABC system protein C (603 aa).

The GIY-YIG domain maps to glutamate 14–isoleucine 92. Positions glutamine 201–valine 236 constitute a UVR domain.

Belongs to the UvrC family. Interacts with UvrB in an incision complex.

Its subcellular location is the cytoplasm. Its function is as follows. The UvrABC repair system catalyzes the recognition and processing of DNA lesions. UvrC both incises the 5' and 3' sides of the lesion. The N-terminal half is responsible for the 3' incision and the C-terminal half is responsible for the 5' incision. This is UvrABC system protein C from Dechloromonas aromatica (strain RCB).